We begin with the raw amino-acid sequence, 339 residues long: Phosphatidylglycerol--prolipoprotein diacylglyceryl transferase (339 aa).

Helical transmembrane passes span Phe-43–Gly-63, Ile-81–Trp-101, and Asn-121–Ala-141. Residue Arg-167 coordinates a 1,2-diacyl-sn-glycero-3-phospho-(1'-sn-glycerol). Helical transmembrane passes span Phe-231–Leu-251 and Leu-300–Trp-320.

The protein belongs to the Lgt family.

The protein localises to the cell membrane. The catalysed reaction is L-cysteinyl-[prolipoprotein] + a 1,2-diacyl-sn-glycero-3-phospho-(1'-sn-glycerol) = an S-1,2-diacyl-sn-glyceryl-L-cysteinyl-[prolipoprotein] + sn-glycerol 1-phosphate + H(+). The protein operates within protein modification; lipoprotein biosynthesis (diacylglyceryl transfer). Catalyzes the transfer of the diacylglyceryl group from phosphatidylglycerol to the sulfhydryl group of the N-terminal cysteine of a prolipoprotein, the first step in the formation of mature lipoproteins. This chain is Phosphatidylglycerol--prolipoprotein diacylglyceryl transferase, found in Deinococcus radiodurans (strain ATCC 13939 / DSM 20539 / JCM 16871 / CCUG 27074 / LMG 4051 / NBRC 15346 / NCIMB 9279 / VKM B-1422 / R1).